An 84-amino-acid polypeptide reads, in one-letter code: MKVTLIAILTCAAVLVLHTTAAEELEESQLMEVGMPDTELAAVDEERLFECSVSCEIEKEGNKDCKKKKCKGGWKCKFNMCVKV.

The signal sequence occupies residues Met-1–Ala-22. The propeptide occupies Glu-23–Arg-47. Disulfide bonds link Cys-51-Cys-65, Cys-55-Cys-76, and Cys-70-Cys-81.

It belongs to the neurotoxin 12 (Hwtx-2) family. 02 (Hwtx-2) subfamily. In terms of tissue distribution, expressed by the venom gland.

The protein resides in the secreted. In terms of biological role, postsynaptic neurotoxin. This Cyriopagopus hainanus (Chinese bird spider) protein is U4-theraphotoxin-Hhn1a.